The following is a 485-amino-acid chain: Aspartyl protease family protein 2 (485 aa).

Residues 1 to 23 form the signal peptide; the sequence is MVGRRKALLFSLCFFFLSLPSFS. A disordered region spans residues 43 to 71; that stretch reads PVSFQPDSDSESLLESEFESGSDSESSSS. The span at 50 to 64 shows a compositional bias: acidic residues; it reads SDSESLLESEFESGS. The region spanning 142 to 480 is the Peptidase A1 domain; the sequence is YFTRLGVGTP…DLASSRVGFA (339 aa). Residues aspartate 160 and aspartate 365 contribute to the active site.

It belongs to the peptidase A1 family.

Functionally, aspartyl protease. Not able to cleave BAG6. This chain is Aspartyl protease family protein 2, found in Arabidopsis thaliana (Mouse-ear cress).